Here is a 101-residue protein sequence, read N- to C-terminus: uncharacterized protein (101 aa).

The chain crosses the membrane as a helical span at residues 13 to 33 (FISIMCLFSIPLCFSLSIFFF).

The protein localises to the membrane. This is an uncharacterized protein from Schizosaccharomyces pombe (strain 972 / ATCC 24843) (Fission yeast).